The primary structure comprises 508 residues: WD repeat-containing protein JIP5 (508 aa).

6 WD repeats span residues 62-105, 106-145, 149-188, 193-233, 253-294, and 345-382; these read EARK…WRTK, RHKGSVRALAIDHDGKHVYTIGADNVLKKADTHSGKVVKK, DGGSKVTKLVKSATHDFLVMGDEVGTIVVLDSNDLTTKNT, HGGD…MKQP, DQED…LEDQ, and SGLDEVGMLDLDFEYRLVSGGMDKLKIWEVPKEENSDS. The segment at 376 to 508 is disordered; sequence KEENSDSDSD…SHGITKFDGL (133 aa). A compositionally biased stretch (acidic residues) spans 380–393; sequence SDSDSDSDINDDSE. Low complexity predominate over residues 407–419; it reads ELGSGSESEVESD. A WD 7 repeat occupies 431–472; the sequence is CTGSDLPGDIEGSEGENNSNDDDNHDDREELWKELDQPTSDE. The segment covering 441–454 has biased composition (acidic residues); the sequence is EGSEGENNSNDDDN. A compositionally biased stretch (basic and acidic residues) spans 455 to 466; it reads HDDREELWKELD. A compositionally biased stretch (basic residues) spans 478–492; the sequence is KRSLKVKDKKNKKFK.

The protein belongs to the WD repeat WDR55 family.

It localises to the nucleus. Its subcellular location is the nucleolus. The sequence is that of WD repeat-containing protein JIP5 (JIP5) from Candida glabrata (strain ATCC 2001 / BCRC 20586 / JCM 3761 / NBRC 0622 / NRRL Y-65 / CBS 138) (Yeast).